We begin with the raw amino-acid sequence, 70 residues long: Putative defensin-like protein 73 (70 aa).

The N-terminal stretch at 1–29 (MNCKIEFMSFLVMTSIVILFLFVSGKVEA) is a signal peptide. 4 disulfides stabilise this stretch: cysteine 33–cysteine 68, cysteine 37–cysteine 57, cysteine 43–cysteine 66, and cysteine 47–cysteine 67.

It belongs to the DEFL family.

It localises to the secreted. This chain is Putative defensin-like protein 73 (LCR44), found in Arabidopsis thaliana (Mouse-ear cress).